The chain runs to 621 residues: Chaperone protein HtpG (621 aa).

The segment at 1-328 (MTQEKKKFDA…SEDLPLNISR (328 aa)) is a; substrate-binding. The tract at residues 329 to 544 (ESLQHNNVLE…DTAMDIRMER (216 aa)) is b. The segment at 545–621 (FLIEQKQIAN…LNDILQKAIL (77 aa)) is c.

Belongs to the heat shock protein 90 family. Homodimer.

Its subcellular location is the cytoplasm. Its function is as follows. Molecular chaperone. Has ATPase activity. The chain is Chaperone protein HtpG from Rickettsia prowazekii (strain Madrid E).